The sequence spans 347 residues: Histone deacetylase 11 (347 aa).

The tract at residues 14–326 (TRWPIVYSPR…LNLFGLGLIG (313 aa)) is histone deacetylase. The active site involves His143.

The protein belongs to the histone deacetylase family. As to quaternary structure, interacts with HDAC6. As to expression, weakly expressed in most tissues. Strongly expressed in brain, heart, skeletal muscle, kidney and testis.

The protein resides in the nucleus. The catalysed reaction is N(6)-acetyl-L-lysyl-[histone] + H2O = L-lysyl-[histone] + acetate. Functionally, responsible for the deacetylation of lysine residues on the N-terminal part of the core histones (H2A, H2B, H3 and H4). Histone deacetylation gives a tag for epigenetic repression and plays an important role in transcriptional regulation, cell cycle progression and developmental events. Histone deacetylases act via the formation of large multiprotein complexes. This is Histone deacetylase 11 (HDAC11) from Homo sapiens (Human).